The following is a 79-amino-acid chain: Small ribosomal subunit protein bS16 (79 aa).

It belongs to the bacterial ribosomal protein bS16 family.

The polypeptide is Small ribosomal subunit protein bS16 (Oleidesulfovibrio alaskensis (strain ATCC BAA-1058 / DSM 17464 / G20) (Desulfovibrio alaskensis)).